Reading from the N-terminus, the 212-residue chain is MHKNAPFKYGKFPNAQCYNITPNENNNGYHIGVIFVIVKDNEIVAWADFKGTTYDVNPVPFTYYNIMDLAYDYNWFNHDTLAHIEGVGFDISYSSYSLCPMSRAHGKDASYLSIRKRVNFKRSTEYVGGLFVKDNKITRISYPLSVSQKDVDVDLDLTENNINRIASVYFDIDEKIVVCGYELPPEEKAEAIEVELEISVDDQIFNAFMNRG.

Belongs to the Anti-DarT factor A family.

In terms of biological role, plays a role in counteracting the host DarT defense system, when mutated at Arg-164. The protein is Anti-DarT factor A (adfA) of Escherichia phage RB69 (Bacteriophage RB69).